The following is a 354-amino-acid chain: Hyaluronan and proteoglycan link protein 1 (354 aa).

Positions 1-15 (MKSLLLLVLISICWA) are excised as a propeptide. N-linked (GlcNAc...) asparagine glycosylation is found at Asn21 and Asn56. One can recognise an Ig-like V-type domain in the interval 38–152 (PHLLVEAEQA…EGLEDDTVVV (115 aa)). 5 disulfide bridges follow: Cys61/Cys139, Cys181/Cys252, Cys205/Cys226, Cys279/Cys349, and Cys304/Cys325. Link domains lie at 159–254 (VVFP…FCFT) and 259–351 (GRFY…YCFR).

Belongs to the HAPLN family. Widely expressed. Weakly expressed in the brain.

It is found in the secreted. The protein localises to the extracellular space. It localises to the extracellular matrix. Its function is as follows. Stabilizes the aggregates of proteoglycan monomers with hyaluronic acid in the extracellular cartilage matrix. This chain is Hyaluronan and proteoglycan link protein 1 (HAPLN1), found in Homo sapiens (Human).